The primary structure comprises 194 residues: 3-isopropylmalate dehydratase small subunit (194 aa).

It belongs to the LeuD family. LeuD type 1 subfamily. In terms of assembly, heterodimer of LeuC and LeuD.

It catalyses the reaction (2R,3S)-3-isopropylmalate = (2S)-2-isopropylmalate. It functions in the pathway amino-acid biosynthesis; L-leucine biosynthesis; L-leucine from 3-methyl-2-oxobutanoate: step 2/4. In terms of biological role, catalyzes the isomerization between 2-isopropylmalate and 3-isopropylmalate, via the formation of 2-isopropylmaleate. In Limosilactobacillus fermentum (strain NBRC 3956 / LMG 18251) (Lactobacillus fermentum), this protein is 3-isopropylmalate dehydratase small subunit.